Consider the following 27-residue polypeptide: thr operon leader peptide (27 aa).

The protein belongs to the thr operon leader peptide family.

Functionally, this protein is involved in control of the biosynthesis of threonine. In Escherichia coli O157:H7, this protein is thr operon leader peptide.